Reading from the N-terminus, the 495-residue chain is 4-aminobutyrate aminotransferase (495 aa).

Position 160 to 161 (160 to 161) interacts with pyridoxal 5'-phosphate; the sequence is GS. Arginine 216 lines the substrate pocket. The residue at position 350 (lysine 350) is an N6-(pyridoxal phosphate)lysine. Threonine 374 contacts pyridoxal 5'-phosphate.

The protein belongs to the class-III pyridoxal-phosphate-dependent aminotransferase family. As to quaternary structure, homodimer. Pyridoxal 5'-phosphate serves as cofactor.

It carries out the reaction 4-aminobutanoate + 2-oxoglutarate = succinate semialdehyde + L-glutamate. This is 4-aminobutyrate aminotransferase (gabT) from Dictyostelium discoideum (Social amoeba).